Here is a 153-residue protein sequence, read N- to C-terminus: Ribosome maturation factor RimP (153 aa).

It belongs to the RimP family.

It is found in the cytoplasm. Its function is as follows. Required for maturation of 30S ribosomal subunits. This Nostoc punctiforme (strain ATCC 29133 / PCC 73102) protein is Ribosome maturation factor RimP.